Here is a 264-residue protein sequence, read N- to C-terminus: S-adenosylmethionine decarboxylase proenzyme (264 aa).

Ser112 (schiff-base intermediate with substrate; via pyruvic acid) is an active-site residue. Ser112 carries the post-translational modification Pyruvic acid (Ser); by autocatalysis. The active-site Proton acceptor; for processing activity is His117. Catalysis depends on Cys140, which acts as the Proton donor; for catalytic activity.

It belongs to the prokaryotic AdoMetDC family. Type 2 subfamily. In terms of assembly, heterooctamer of four alpha and four beta chains arranged as a tetramer of alpha/beta heterodimers. Requires pyruvate as cofactor. In terms of processing, is synthesized initially as an inactive proenzyme. Formation of the active enzyme involves a self-maturation process in which the active site pyruvoyl group is generated from an internal serine residue via an autocatalytic post-translational modification. Two non-identical subunits are generated from the proenzyme in this reaction, and the pyruvate is formed at the N-terminus of the alpha chain, which is derived from the carboxyl end of the proenzyme. The post-translation cleavage follows an unusual pathway, termed non-hydrolytic serinolysis, in which the side chain hydroxyl group of the serine supplies its oxygen atom to form the C-terminus of the beta chain, while the remainder of the serine residue undergoes an oxidative deamination to produce ammonia and the pyruvoyl group blocking the N-terminus of the alpha chain.

The catalysed reaction is S-adenosyl-L-methionine + H(+) = S-adenosyl 3-(methylsulfanyl)propylamine + CO2. It functions in the pathway amine and polyamine biosynthesis; S-adenosylmethioninamine biosynthesis; S-adenosylmethioninamine from S-adenosyl-L-methionine: step 1/1. Its function is as follows. Catalyzes the decarboxylation of S-adenosylmethionine to S-adenosylmethioninamine (dcAdoMet), the propylamine donor required for the synthesis of the polyamines spermine and spermidine from the diamine putrescine. This is S-adenosylmethionine decarboxylase proenzyme from Salmonella agona (strain SL483).